Reading from the N-terminus, the 379-residue chain is MTSVAKVYYSQTTQTESRPLVAPGIRRRRVLTKDGRSNVRMEHIADKRFLYLKDLWTTFIDMQWRYKLLLFSATFAGTWFLFGVVWYLVAVAHGDLLELGPPANHTPCVVQVHTLTGAFLFSLESQTTIGYGFRYISEECPLAIVLLIAQLVLTTILEIFITGTFLAKIARPKKRAETIRFSQHAVVAYHNGKLCLMIRVANMRKSLLIGCQVTGKLLQTHQTKEGENIRLNQVNVTFQVDTASDSPFLILPLTFYHVVDETSPLKDLPLRSGEGDFELVLILSGTVESTSATCQVRTSYLPEEILWGYEFTPAISLSASGKYVADFSLFDQVVKVASPGGLRDSTVRYGDPEKLKLEESLREQAEKEGSALSVRISNV.

The Cytoplasmic segment spans residues 1–61 (MTSVAKVYYS…LKDLWTTFID (61 aa)). Arg-36 serves as a coordination point for 1,2-dioctanoyl-sn-glycero-3-phospho-(1D-myo-inositol-4,5-bisphosphate). Residues 62 to 88 (MQWRYKLLLFSATFAGTWFLFGVVWYL) traverse the membrane as a helical segment. At 89–114 (VAVAHGDLLELGPPANHTPCVVQVHT) the chain is on the extracellular side. A disulfide bridge connects residues Cys-108 and Cys-140. Positions 115–131 (LTGAFLFSLESQTTIGY) form an intramembrane region, discontinuously helical; Pore-forming. The short motif at 128–133 (TIGYGF) is the Selectivity filter element. Residues 132-140 (GFRYISEEC) are Extracellular-facing. The chain crosses the membrane as a helical span at residues 141 to 166 (PLAIVLLIAQLVLTTILEIFITGTFL). At 167–379 (AKIARPKKRA…SALSVRISNV (213 aa)) the chain is on the cytoplasmic side. Residues Lys-168, Arg-171, and Lys-173 each coordinate 1,2-dioctanoyl-sn-glycero-3-phospho-(1D-myo-inositol-4,5-bisphosphate). An ATP-binding site is contributed by 210–217 (GCQVTGKL).

The protein belongs to the inward rectifier-type potassium channel (TC 1.A.2.1) family. KCNJ10 subfamily. As to quaternary structure, homotetramer. In kidney cells, it forms heteromeric channels with Kir5.1/KCNJ16; this interaction is required for KCNJ16 localization to the basolateral membrane. Interacts with MAGI1, alone and possibly as a heteromer with KCNJ16; this interaction may facilitate KCNJ10/KCNJ16 potassium channel expression at the basolateral membrane in kidney cells. Interacts with PATJ. In terms of tissue distribution, predominantly expressed in the brain, including in glial cells of the cerebellum and forebrain. Expressed at lower levels in the kidney, and other peripheral tissues.

The protein resides in the membrane. It localises to the basolateral cell membrane. The catalysed reaction is K(+)(in) = K(+)(out). Channel activity is strongly regulated by variations of cytosolic pH; channels are activated by alkaline and inhibited by acidic pH values. Activated by phosphatidylinositol 4,5 biphosphate (PtdIns(4,5)P2). Inhibited by Ba(2+) and Cs(+). May be responsible for potassium buffering action of glial cells in the brain. Inward rectifier potassium channels are characterized by a greater tendency to allow potassium to flow into the cell rather than out of it. Their voltage dependence is regulated by the concentration of extracellular potassium; as external potassium is raised, the voltage range of the channel opening shifts to more positive voltages. The inward rectification is mainly due to the blockage of outward current by internal magnesium. Can be blocked by extracellular barium and cesium. In the kidney, together with KCNJ16, mediates basolateral K(+) recycling in distal tubules; this process is critical for Na(+) reabsorption at the tubules. In Rattus norvegicus (Rat), this protein is ATP-sensitive inward rectifier potassium channel 10.